The sequence spans 214 residues: Outer membrane lipoprotein MapA (214 aa).

Residues Met1 to Ala17 form the signal peptide. Cys18 carries the N-palmitoyl cysteine lipid modification. A lipid anchor (S-diacylglycerol cysteine) is attached at Cys18.

It localises to the cell outer membrane. The chain is Outer membrane lipoprotein MapA (mapA) from Campylobacter jejuni subsp. jejuni serotype O:6 (strain 81116 / NCTC 11828).